We begin with the raw amino-acid sequence, 532 residues long: Flavin-containing monooxygenase 1 (532 aa).

Alanine 2 bears the N-acetylalanine mark. Topologically, residues 2-510 (AKRVAIVGAG…TRIVQESPTP (509 aa)) are lumenal. FAD is bound by residues 9–13 (GAGVS), glutamate 32, 40–41 (LW), and 61–62 (NS). Residues 60 to 61 (SN) and 195 to 198 (SGTD) each bind NADP(+). Residues 511-531 (FASLLKLLSLLALLMAIFLIF) form a helical membrane-spanning segment. Position 532 (leucine 532) is a topological domain, cytoplasmic.

Belongs to the FMO family. FAD serves as cofactor. Liver.

Its subcellular location is the endoplasmic reticulum membrane. It carries out the reaction hypotaurine + NADPH + O2 + H(+) = taurine + NADP(+) + H2O. The enzyme catalyses hypotaurine + NADH + O2 + H(+) = taurine + NAD(+) + H2O. The catalysed reaction is trimethylamine + NADPH + O2 = trimethylamine N-oxide + NADP(+) + H2O. It catalyses the reaction N,N-dimethylaniline + NADPH + O2 + H(+) = N,N-dimethylaniline N-oxide + NADP(+) + H2O. In terms of biological role, broad spectrum monooxygenase that catalyzes the oxygenation of a wide variety of nitrogen- and sulfur-containing compounds including xenobiotics. Catalyzes the S-oxygenation of hypotaurine to produce taurine, an organic osmolyte involved in cell volume regulation as well as a variety of cytoprotective and developmental processes. In vitro, catalyzes the N-oxygenation of trimethylamine (TMA) to produce trimethylamine N-oxide (TMAO) and could therefore participate to the detoxification of this compound that is generated by the action of gut microbiota from dietary precursors such as choline, choline containing compounds, betaine or L-carnitine. The sequence is that of Flavin-containing monooxygenase 1 (FMO1) from Canis lupus familiaris (Dog).